The sequence spans 357 residues: Anthranilate phosphoribosyltransferase (357 aa).

5-phospho-alpha-D-ribose 1-diphosphate-binding positions include Gly91, 94–95 (GD), Thr99, 101–104 (NIST), 119–127 (KHGNRSVSS), and Ser131. Anthranilate is bound at residue Gly91. A Mg(2+)-binding site is contributed by Ser103. Asn122 lines the anthranilate pocket. Arg177 contributes to the anthranilate binding site. Mg(2+) contacts are provided by Asp235 and Glu236.

The protein belongs to the anthranilate phosphoribosyltransferase family. Homodimer. Mg(2+) is required as a cofactor.

The catalysed reaction is N-(5-phospho-beta-D-ribosyl)anthranilate + diphosphate = 5-phospho-alpha-D-ribose 1-diphosphate + anthranilate. Its pathway is amino-acid biosynthesis; L-tryptophan biosynthesis; L-tryptophan from chorismate: step 2/5. In terms of biological role, catalyzes the transfer of the phosphoribosyl group of 5-phosphorylribose-1-pyrophosphate (PRPP) to anthranilate to yield N-(5'-phosphoribosyl)-anthranilate (PRA). This Shewanella baltica (strain OS185) protein is Anthranilate phosphoribosyltransferase.